Reading from the N-terminus, the 397-residue chain is Alpha-2B adrenergic receptor (397 aa).

Residues 1–25 traverse the membrane as a helical segment; that stretch reads AIAAIIIFLILFTIFGNALVILAVL. The Cytoplasmic portion of the chain corresponds to 26 to 36; it reads TSRSLRAPQNL. The chain crosses the membrane as a helical span at residues 37–62; sequence FLVSLAAADILVATLIIPFSLANELL. Topologically, residues 63–72 are extracellular; that stretch reads GYWYFRRMWC. Cys72 and Cys151 form a disulfide bridge. A helical transmembrane segment spans residues 73-95; that stretch reads KVYLALDVLFCTSSIVHLCAISL. Residues 96 to 117 are Cytoplasmic-facing; the sequence is DRYWAVSRALEYNSKRTPRRIK. A helical transmembrane segment spans residues 118 to 140; sequence CIILMVWLIAAVISLPSLVYKGD. Over 141–156 the chain is Extracellular; the sequence is QGPQPSGAPQCNLNQE. A helical transmembrane segment spans residues 157–180; sequence TWYILASSIGSFFAPCLIMILVYL. Topologically, residues 181 to 361 are cytoplasmic; sequence RIYLIAKRSH…LSREKRFTFV (181 aa). 2 disordered regions span residues 193 to 212 and 230 to 319; these read GPRAKGAPGKSKFKQSRQVP and AAGE…LQQP. Positions 280 to 300 are enriched in acidic residues; sequence SLEEEAEEEEEGEEEREEECE. Residues 301–319 show a composition bias toward low complexity; it reads PQALPASPASACSPPLQQP. A helical membrane pass occupies residues 362 to 385; it reads LAVVIGVFVLCWFPFFFSYSLGAI. The Extracellular segment spans residues 386 to 394; the sequence is CPQQCKVPH. Residues 395–397 form a helical membrane-spanning segment; that stretch reads DLF.

It belongs to the G-protein coupled receptor 1 family. Adrenergic receptor subfamily. ADRA2B sub-subfamily. Interacts with RAB26. Interacts with PPP1R9B.

It is found in the cell membrane. Its function is as follows. Alpha-2 adrenergic receptors mediate the catecholamine-induced inhibition of adenylate cyclase through the action of G proteins. This chain is Alpha-2B adrenergic receptor (ADRA2B), found in Talpa europaea (European mole).